The sequence spans 254 residues: NAD-dependent protein deacetylase 1 (254 aa).

A Deacetylase sirtuin-type domain is found at 3-252 (VDFTTDELDE…PKLLDRLRGM (250 aa)). Residues Ala29, Thr33, Phe40, Arg41, Gln105, Val107, Asp108, and His123 each contribute to the NAD(+) site. A nicotinamide-binding site is contributed by Phe40. Residues Val107 and Asp108 each contribute to the nicotinamide site. The active-site Proton acceptor is His123. 4 residues coordinate Zn(2+): Cys131, Cys134, Cys154, and Cys157. The NAD(+) site is built by Thr195, Ser196, and Asn220.

Belongs to the sirtuin family. Class U subfamily. Zn(2+) serves as cofactor.

The protein resides in the cytoplasm. It catalyses the reaction N(6)-acetyl-L-lysyl-[protein] + NAD(+) + H2O = 2''-O-acetyl-ADP-D-ribose + nicotinamide + L-lysyl-[protein]. Functionally, NAD-dependent protein deacetylase which modulates the activities of several enzymes which are inactive in their acetylated form. Deacetylates the N-terminal lysine residue of Alba, the major archaeal chromatin protein and that, in turn, increases Alba's DNA binding affinity, thereby repressing transcription. The protein is NAD-dependent protein deacetylase 1 of Pyrobaculum aerophilum (strain ATCC 51768 / DSM 7523 / JCM 9630 / CIP 104966 / NBRC 100827 / IM2).